A 367-amino-acid polypeptide reads, in one-letter code: Cobalt-precorrin-5B C(1)-methyltransferase (367 aa).

Belongs to the CbiD family.

The enzyme catalyses Co-precorrin-5B + S-adenosyl-L-methionine = Co-precorrin-6A + S-adenosyl-L-homocysteine. It functions in the pathway cofactor biosynthesis; adenosylcobalamin biosynthesis; cob(II)yrinate a,c-diamide from sirohydrochlorin (anaerobic route): step 6/10. Its function is as follows. Catalyzes the methylation of C-1 in cobalt-precorrin-5B to form cobalt-precorrin-6A. The sequence is that of Cobalt-precorrin-5B C(1)-methyltransferase from Thermosynechococcus vestitus (strain NIES-2133 / IAM M-273 / BP-1).